Reading from the N-terminus, the 316-residue chain is Transaldolase (316 aa).

The active-site Schiff-base intermediate with substrate is K126.

Belongs to the transaldolase family. Type 1 subfamily. Homodimer.

It localises to the cytoplasm. The catalysed reaction is D-sedoheptulose 7-phosphate + D-glyceraldehyde 3-phosphate = D-erythrose 4-phosphate + beta-D-fructose 6-phosphate. It participates in carbohydrate degradation; pentose phosphate pathway; D-glyceraldehyde 3-phosphate and beta-D-fructose 6-phosphate from D-ribose 5-phosphate and D-xylulose 5-phosphate (non-oxidative stage): step 2/3. Transaldolase is important for the balance of metabolites in the pentose-phosphate pathway. This is Transaldolase from Methylibium petroleiphilum (strain ATCC BAA-1232 / LMG 22953 / PM1).